Consider the following 483-residue polypeptide: Cytochrome P450 monooxygenase stcF (483 aa).

Cys424 contacts heme.

It belongs to the cytochrome P450 family. Requires heme as cofactor.

The protein operates within mycotoxin biosynthesis; sterigmatocystin biosynthesis. In terms of biological role, cytochrome P450 monooxygenase; part of the gene cluster that mediates the biosynthesis of sterigmatocystin (ST), a polyketide-derived furanocoumarin which is part of the most toxic and carcinogenic compounds among the known mycotoxins. The first step in the biosynthesis of sterigmatocystin is the production of hexanoate by the fatty acid synthase (FAS) units stcJ and stcK. The polyketide backbone is assembled by the non-reducing polyketide synthase stcA by condensation of the starter hexanoyl-CoA and 7 malonyl-CoA extender units followed by cyclization and release of norsolorinic acid. Norsolorinic acid is the first stable intermediate in the biosynthesis of sterigmatocystin and is converted into averantin (AVN) by the ketoreductase stcE which reduces the hexanoate ketone to an alcohol. Averantin is then oxidized into 5'-hydroxyaverantin (HAVN) by the cytochrome P450 monooxygenase stcF. 5'-hydroxyaverantin is further converted to 5'-oxyaverantin (OAVN) by the 5'-hydroxyaverantin dehydrogenase stcG. The next step is the conversion of OAVN into averufin (AVF) which is catalyzed by a yet to be identified enzyme. The cytochrome P450 monooxygenase stcB and the flavin-binding monooxygenase stcW are both required for the conversion of averufin to 1-hydroxyversicolorone. The esterase stcI probably catalyzes the formation of versiconal hemiacetal acetate from 1-hydroxyversicolorone. The oxydoreductase stcN then probably catalyzes the biosynthetic step from versiconal to versicolorin B (VERB). The next step is performed by the versicolorin B desaturase stcL to produce versicolorin A (VERA). The ketoreductase stcU and the cytochrome P450 monooxygenase stcS are involved in the conversion of versicolorin A to demethylsterigmatocystin. The Baeyer-Villiger oxidas stcQ and the reductase stcR might be involved in the biosynthetic step from versicolorin A to demethylsterigmatocystin. The final step in the biosynthesis of sterigmatocystin is the methylation of demethylsterigmatocystin catalyzed by the methyltransferase stcP. The protein is Cytochrome P450 monooxygenase stcF of Emericella nidulans (strain FGSC A4 / ATCC 38163 / CBS 112.46 / NRRL 194 / M139) (Aspergillus nidulans).